The primary structure comprises 56 residues: Trypsin inhibitor 1 (56 aa).

A signal peptide spans 1–25 (MATTMAKLITLVVLAILAFVEVSVS). Positions 26-39 (GYKTSISTITIEDN) are excised as a propeptide. The segment at residues 40 to 53 (GRCTKSIPPICFPD) is a cross-link (cyclopeptide (Gly-Asp)). A disulfide bond links C42 and C50. Residues 54-56 (GRP) constitute a propeptide that is removed on maturation.

In terms of processing, this is a cyclic peptide.

In terms of biological role, inhibits trypsin, cathepsin G, elastase, chymotrypsin and thrombin. Does not inhibit factor Xa. This Helianthus annuus (Common sunflower) protein is Trypsin inhibitor 1.